The following is a 119-amino-acid chain: MKRVAFIFSSAPHGSAAGREGLDALLATSALTDEIGVFFVGDGVFQLLPDQRPGAVLARDYIATFKLLSLYDIDQCWLCADSARERGLDPATPWVVDVECLAPDALRARLHEFDVILRF.

Belongs to the DsrF/TusC family. Heterohexamer, formed by a dimer of trimers. The hexameric TusBCD complex contains 2 copies each of TusB, TusC and TusD. The TusBCD complex interacts with TusE.

The protein localises to the cytoplasm. Its function is as follows. Part of a sulfur-relay system required for 2-thiolation of 5-methylaminomethyl-2-thiouridine (mnm(5)s(2)U) at tRNA wobble positions. This Klebsiella pneumoniae (strain 342) protein is Protein TusC.